We begin with the raw amino-acid sequence, 280 residues long: Beta-glucosyl-HMC-alpha-glucosyl-transferase (280 aa).

Its pathway is genetic information processing; DNA modification. Functionally, transfers a gentiobiosyl-group on a hydroxymethylcytosine residue in DNA. Is involved in a DNA modification process to protects the phage genome against its own nucleases and the host restriction endonuclease system. The protein is Beta-glucosyl-HMC-alpha-glucosyl-transferase of Enterobacteria phage T6 (Bacteriophage T6).